Reading from the N-terminus, the 468-residue chain is Putrescine aminotransferase (468 aa).

Pyridoxal 5'-phosphate is bound by residues 150 to 151 and Gln-274; that span reads GT. Lys-300 carries the N6-(pyridoxal phosphate)lysine modification. Thr-332 contacts pyridoxal 5'-phosphate.

The protein belongs to the class-III pyridoxal-phosphate-dependent aminotransferase family. Putrescine aminotransferase subfamily. It depends on pyridoxal 5'-phosphate as a cofactor.

It carries out the reaction an alkane-alpha,omega-diamine + 2-oxoglutarate = an omega-aminoaldehyde + L-glutamate. The enzyme catalyses putrescine + 2-oxoglutarate = 1-pyrroline + L-glutamate + H2O. It catalyses the reaction cadaverine + 2-oxoglutarate = 5-aminopentanal + L-glutamate. It participates in amine and polyamine degradation; putrescine degradation; 4-aminobutanal from putrescine (transaminase route): step 1/1. Functionally, catalyzes the aminotransferase reaction from putrescine to 2-oxoglutarate, leading to glutamate and 4-aminobutanal, which spontaneously cyclizes to form 1-pyrroline. This is the first step in one of two pathways for putrescine degradation, where putrescine is converted into 4-aminobutanoate (gamma-aminobutyrate or GABA) via 4-aminobutanal. Also functions as a cadaverine transaminase in a a L-lysine degradation pathway to succinate that proceeds via cadaverine, glutarate and L-2-hydroxyglutarate. The protein is Putrescine aminotransferase of Pectobacterium atrosepticum (strain SCRI 1043 / ATCC BAA-672) (Erwinia carotovora subsp. atroseptica).